The following is a 194-amino-acid chain: Inner membrane-spanning protein YciB (194 aa).

5 helical membrane passes run 3–23 (LFIEYFPLLIFFIINSIAGIY), 47–67 (IPAKQWIIFGLIVVFGGLTIY), 76–96 (WKVTIINAFFAAALLVSNTFF), 119–139 (LNLAWALFFLFCSGLNYYIAF), and 149–169 (FKVFGLTGLMFLFSITSILFL).

This sequence belongs to the YciB family.

The protein resides in the cell inner membrane. In terms of biological role, plays a role in cell envelope biogenesis, maintenance of cell envelope integrity and membrane homeostasis. The sequence is that of Inner membrane-spanning protein YciB from Colwellia psychrerythraea (strain 34H / ATCC BAA-681) (Vibrio psychroerythus).